An 83-amino-acid chain; its full sequence is Conotoxin VnMKLT1-022 (83 aa).

The N-terminal stretch at 1 to 22 is a signal peptide; that stretch reads MKLMCMMIVAVLFLTAWTFVTA. The propeptide occupies 23-55; it reads DDSINGPENRRIWEKLLSKTRDEMKNPEASKLN. Cystine bridges form between Cys59–Cys74, Cys66–Cys78, and Cys73–Cys82.

Belongs to the conotoxin O1 superfamily. In terms of tissue distribution, expressed by the venom duct.

The protein resides in the secreted. The chain is Conotoxin VnMKLT1-022 from Conus ventricosus (Mediterranean cone).